Consider the following 246-residue polypeptide: MFFNTKHTTALCFVTCMAFSSSSIADIVISGTRVIYKSDQKSVNVRLENKGNNPLLVQSWLDTGDDNAEPGSITVPFTATPPVSRIDAKRGQTIKLMYTASTSLPKDRESVFWFNVLEVPPKPDAEKVANQSLLQLAFRTRIKLFYRPDGLKGNPSEAPLALKWFWSGSEGKASLRVTNPTPYYVSFSSGDLEASGKRYPIDVKMIAPFSDEVMKVNGLNGKANSAKVHFYAINDFGGAIEGNARL.

Positions 1–25 (MFFNTKHTTALCFVTCMAFSSSSIA) are cleaved as a signal peptide.

It belongs to the periplasmic pilus chaperone family.

It is found in the periplasm. Part of the yadCKLM-htrE-yadVN fimbrial operon. Could contribute to adhesion to various surfaces in specific environmental niches. This Escherichia coli (strain K12) protein is Probable fimbrial chaperone YadV (yadV).